A 402-amino-acid polypeptide reads, in one-letter code: Multidrug resistance protein MdtH (402 aa).

The next 10 helical transmembrane spans lie at 13 to 33, 34 to 54, 99 to 116, 139 to 159, 165 to 185, 214 to 234, 244 to 264, 277 to 297, 340 to 360, and 368 to 388; these read YFLL…FPLI, SIRF…ALGL, PWIL…GTLF, LLMM…SWLL, YVCW…AWLL, VLTL…LPIM, AVKW…YPIA, LMFG…STTL, LGLA…YDMG, and LPWA…YWQF.

Belongs to the major facilitator superfamily. DHA1 family. MdtH (TC 2.A.1.2.21) subfamily.

The protein resides in the cell inner membrane. This chain is Multidrug resistance protein MdtH, found in Edwardsiella ictaluri (strain 93-146).